A 269-amino-acid chain; its full sequence is uncharacterized protein (269 aa).

The HTH gntR-type domain maps to 5 to 73; it reads APKWRELADR…RGHGTVVRRK (69 aa). Residues 33–52 constitute a DNA-binding region (H-T-H motif); it reads IRDLVEAGEGSKETVHRAYK.

In terms of biological role, the imp locus inhibits the extrachromosomal maintenance of the Streptomyces plasmid SLP1. This is an uncharacterized protein from Streptomyces coelicolor (strain ATCC BAA-471 / A3(2) / M145).